We begin with the raw amino-acid sequence, 75 residues long: Chaplin-D (75 aa).

An N-terminal signal peptide occupies residues 1-23; that stretch reads MKKSAAVVAGAIMALGMAAPAFA. Positions 34–74 constitute a Chaplin domain; sequence SPGVLSGNVIQVPVHVPVNVCGNSINVVGLLNPAFGNKCEN. A disulfide bond links C54 and C72.

Belongs to the chaplin family. Short chaplin subfamily.

The protein localises to the cell surface. The protein resides in the secreted. Its subcellular location is the cell wall. It is found in the fimbrium. In terms of biological role, one of 8 partially redundant surface-active proteins required for efficient formation of aerial mycelium; the short chaplins assemble into a hydrophobic, amyloidal fibrillar surface layer that envelopes and protects aerial hyphae and spores, presumably anchored to the long chaplins. Chaplins have an overlapping function with the surface-active SapB peptide; chaplins are essential on minimal medium while on rich medium both chaplins and SapB are required for efficient aerial hyphae formation. Chaplins are also involved in cell attachment to a hydrophobic surface. Forms amyloid fibrils in vitro probably composed of stacked beta-sheets, at low extracellular concentrations individually restores the ability to form aerial hyphae to a chaplin-deficient strain. A small chaplin extract (ChpD, ChpE, ChpF, ChpG and ChpH) self-assembles into 2 different amyloids; small fibrils at the air-water interface form an amphipathic membrane that resembles spore-surface structures involved in aerial hyphae formation, and hydrophilic fibrils in solution that resemble the fibers that attach cells to a hydrophobic surface. At the air-water interface the hydrophilic surface is in contact with water (probably equivalent to the peptidoglycan layer), while the hydrophobic face is exposed to the air, making the surface of the aerial hyphae hydrophobic. A minimal chaplin strain capable of forming aerial mycelium/hyphae on minimal medium contains ChpC, ChpE and ChpH. The strain also has restored rodlet formation on the hyphae surface. A second minimal chaplin strain with ChpA, ChpD and ChpE makes slightly less robust hyphae. A small chaplin extract applied to a chaplin-deficient strain restores aerial hyphae formation. The small chaplin extract forms an amyloid-like structure similar to that seen on the surface of cells without rodlets (rdlA-rdlB deletions), and is highly surface active, reducing surface tension from 72 to 26 mJ/m(2), which probably allows escape of hyphae from an aqueous environment into air. This chain is Chaplin-D, found in Streptomyces coelicolor (strain ATCC BAA-471 / A3(2) / M145).